Here is a 202-residue protein sequence, read N- to C-terminus: ATP-dependent Clp protease proteolytic subunit (202 aa).

Ser-101 functions as the Nucleophile in the catalytic mechanism. Residue His-126 is part of the active site.

The protein belongs to the peptidase S14 family. Component of the chloroplastic Clp protease core complex.

It is found in the plastid. Its subcellular location is the chloroplast stroma. The enzyme catalyses Hydrolysis of proteins to small peptides in the presence of ATP and magnesium. alpha-casein is the usual test substrate. In the absence of ATP, only oligopeptides shorter than five residues are hydrolyzed (such as succinyl-Leu-Tyr-|-NHMec, and Leu-Tyr-Leu-|-Tyr-Trp, in which cleavage of the -Tyr-|-Leu- and -Tyr-|-Trp bonds also occurs).. In terms of biological role, cleaves peptides in various proteins in a process that requires ATP hydrolysis. Has a chymotrypsin-like activity. Plays a major role in the degradation of misfolded proteins. The protein is ATP-dependent Clp protease proteolytic subunit of Nuphar advena (Common spatterdock).